The following is a 219-amino-acid chain: MESQEPTESSQNGKQYIISEELISEGKWVKLEKTTYMDPTGKTRTWESVKRTTRKEQTADGVAVIPVLQRTLHYECIVLVKQFRPPMGGYCIEFPAGLIDDGETPEAAALRELEEETGYKGDIAECSPAVCMDPGLSNCTIHIVTVTINGDDAENARPKPKPGDGEFVEVISLPKNDLLQRLDALVAEEHLTVDARVYSYALALKHANAKPFEVPFLKF.

Met-1 is subject to N-acetylmethionine. Residues Ser-3 and Ser-10 each carry the phosphoserine modification. Trp-28 is a substrate binding site. A Glycyl lysine isopeptide (Lys-Gly) (interchain with G-Cter in SUMO2) cross-link involves residue Lys-42. Thr-45 carries the post-translational modification Phosphothreonine. Residues 46–47 (WE) and Arg-51 each bind substrate. Positions 57–197 (QTADGVAVIP…EEHLTVDARV (141 aa)) constitute a Nudix hydrolase domain. Phosphotyrosine is present on Tyr-74. Arg-84 is a substrate binding site. Position 96 (Ala-96) interacts with Mg(2+). The Nudix box signature appears at 97-118 (GLIDDGETPEAAALRELEEETG). A substrate-binding site is contributed by Leu-98. Mg(2+) contacts are provided by Glu-112 and Glu-116. Asp-133 is a binding site for substrate. Residue Glu-166 participates in Mg(2+) binding. Lys-210 and Lys-218 each carry N6-acetyllysine.

It belongs to the Nudix hydrolase family. Homodimer. Interacts with PARG. The cofactor is Mg(2+). Phosphorylation at Thr-45 is required for homodimer stability; dephosphorylation results in destabilization of the homodimer. Dephosphorylation at Thr-45 promotes the ATP-synthesis activity. As to expression, widely expressed. Most abundant in liver.

The protein localises to the nucleus. The enzyme catalyses D-ribose 5-phosphate + ATP + H(+) = ADP-D-ribose + diphosphate. It carries out the reaction ADP-D-ribose + H2O = D-ribose 5-phosphate + AMP + 2 H(+). It catalyses the reaction 8-oxo-dGDP + H2O = 8-oxo-dGMP + phosphate + H(+). Functionally, enzyme that can either act as an ADP-sugar pyrophosphatase in absence of diphosphate or catalyze the synthesis of ATP in presence of diphosphate. In absence of diphosphate, hydrolyzes with similar activities various modified nucleoside diphosphates such as ADP-ribose, ADP-mannose, ADP-glucose, 8-oxo-GDP and 8-oxo-dGDP. Can also hydrolyze other nucleotide sugars with low activity. In presence of diphosphate, mediates the synthesis of ATP in the nucleus by catalyzing the conversion of ADP-ribose to ATP and ribose 5-phosphate. Nuclear ATP synthesis takes place when dephosphorylated at Thr-45. Nuclear ATP generation is required for extensive chromatin remodeling events that are energy-consuming. Does not play a role in U8 snoRNA decapping activity. Binds U8 snoRNA. This is ADP-sugar pyrophosphatase (NUDT5) from Homo sapiens (Human).